The chain runs to 432 residues: Histidine--tRNA ligase (432 aa).

Belongs to the class-II aminoacyl-tRNA synthetase family.

It is found in the cytoplasm. The enzyme catalyses tRNA(His) + L-histidine + ATP = L-histidyl-tRNA(His) + AMP + diphosphate + H(+). In Halobacterium salinarum (strain ATCC 29341 / DSM 671 / R1), this protein is Histidine--tRNA ligase.